The following is a 331-amino-acid chain: 3'-5' exonuclease (331 aa).

The disordered stretch occupies residues 27–92; the sequence is ERVKQTNAAK…EDGPASPEKE (66 aa). Residues 31-43 are compositionally biased toward polar residues; the sequence is QTNAAKKQIATNN. The span at 47 to 67 shows a compositional bias: basic and acidic residues; it reads KNQDTPEMIKDKENAESENPP. Residues S80 and S88 each carry the phosphoserine modification. The region spanning 118–290 is the 3'-5' exonuclease domain; it reads SADEVMQWVE…IGQVIYREIE (173 aa). Residues D140, E142, and D278 each contribute to the Mg(2+) site.

It belongs to the WRNexo family.

It is found in the nucleus. In terms of biological role, has exonuclease activity on both single-stranded and duplex templates bearing overhangs, but not blunt ended duplex DNA, and cleaves in a 3'-5' direction. Essential for the formation of DNA replication focal centers. Has an important role in maintaining genome stability. In Drosophila grimshawi (Hawaiian fruit fly), this protein is 3'-5' exonuclease.